The following is a 387-amino-acid chain: Mannitol-1-phosphate 5-dehydrogenase (387 aa).

An NAD(+)-binding site is contributed by 3-14 (ALHFGAGNIGRG).

It belongs to the mannitol dehydrogenase family.

The enzyme catalyses D-mannitol 1-phosphate + NAD(+) = beta-D-fructose 6-phosphate + NADH + H(+). The chain is Mannitol-1-phosphate 5-dehydrogenase from Yersinia pestis bv. Antiqua (strain Antiqua).